A 428-amino-acid chain; its full sequence is D-inositol 3-phosphate glycosyltransferase (428 aa).

Residue H5 participates in 1D-myo-inositol 3-phosphate binding. UDP-N-acetyl-alpha-D-glucosamine contacts are provided by residues 11-12 and G19; that span reads QP. 1D-myo-inositol 3-phosphate contacts are provided by residues 16–21, K74, Y107, T131, and R151; that span reads DAGGMN. Positions 225, 230, and 283 each coordinate UDP-N-acetyl-alpha-D-glucosamine. Residues F292, Q293, and A295 each coordinate Mg(2+). The UDP-N-acetyl-alpha-D-glucosamine site is built by E305 and E313. A Mg(2+)-binding site is contributed by T319.

Belongs to the glycosyltransferase group 1 family. MshA subfamily. Homodimer.

It carries out the reaction 1D-myo-inositol 3-phosphate + UDP-N-acetyl-alpha-D-glucosamine = 1D-myo-inositol 2-acetamido-2-deoxy-alpha-D-glucopyranoside 3-phosphate + UDP + H(+). In terms of biological role, catalyzes the transfer of a N-acetyl-glucosamine moiety to 1D-myo-inositol 3-phosphate to produce 1D-myo-inositol 2-acetamido-2-deoxy-glucopyranoside 3-phosphate in the mycothiol biosynthesis pathway. This Mycobacterium leprae (strain Br4923) protein is D-inositol 3-phosphate glycosyltransferase.